We begin with the raw amino-acid sequence, 392 residues long: Fasciculation and elongation protein zeta-1 (392 aa).

Residues 1–37 are disordered; that stretch reads MEAPLVSLDEEFEDLRPSCSEDPEEKPQCFYGSSPHH. Serine 58 is subject to Phosphoserine. Positions 175–198 are disordered; sequence MQNSPDPEEEEEVLEEEDGGETSS. A compositionally biased stretch (acidic residues) spans 180–194; it reads DPEEEEEVLEEEDGG. A coiled-coil region spans residues 230 to 298; sequence SELTELLDQV…KKRRKEKGLS (69 aa). Residues serine 298 and serine 316 each carry the phosphoserine modification.

This sequence belongs to the zygin family. In terms of assembly, homodimer; disulfide-linked. May form heterodimers with FEZ2. Interacts with the NH2-terminal variable region (V1) of PKC zeta and weakly with that of PKC epsilon. Interacts with UBE4B. Interacts with SAP30L. Interacts with SCOC and ULK1; SCOC interferes with ULK1-binding to FEZ1. Directly interacts with SCOC and UVRAG. Stabilizes the interaction between SCOC and UVRAG during amino acid starvation. In terms of processing, phosphorylated by protein kinase C zeta; which enhances interaction with UBE4B and polyubiquitination. Polyubiquitinated in a UBE4B-dependent manner; which does not lead to proteasomal degradation and may be important for neurogenic activity. Polyubiquitin linkage seems to be mainly through Lys-26. In terms of tissue distribution, mainly expressed in brain.

It localises to the cytoplasm. It is found in the cytoskeleton. The protein resides in the microtubule organizing center. Its subcellular location is the centrosome. The protein localises to the cell membrane. In terms of biological role, may be involved in axonal outgrowth as component of the network of molecules that regulate cellular morphology and axon guidance machinery. Able to restore partial locomotion and axonal fasciculation to C.elegans unc-76 mutants in germline transformation experiments. May participate in the transport of mitochondria and other cargos along microtubules. This is Fasciculation and elongation protein zeta-1 (FEZ1) from Homo sapiens (Human).